Consider the following 207-residue polypeptide: SPRY domain-containing protein 4 (207 aa).

The B30.2/SPRY domain maps to 12-207 (YRWGTKRWGV…HSGLEVPKGL (196 aa)). N6-acetyllysine occurs at positions 53 and 130. An N6-succinyllysine modification is found at Lys139.

The polypeptide is SPRY domain-containing protein 4 (Spryd4) (Rattus norvegicus (Rat)).